The sequence spans 155 residues: 6,7-dimethyl-8-ribityllumazine synthase (155 aa).

5-amino-6-(D-ribitylamino)uracil is bound by residues F26, 60 to 62, and 84 to 86; these read ALE and AVI. 89 to 90 serves as a coordination point for (2S)-2-hydroxy-3-oxobutyl phosphate; that stretch reads ET. H92 serves as the catalytic Proton donor. Residue N117 participates in 5-amino-6-(D-ribitylamino)uracil binding. R131 is a binding site for (2S)-2-hydroxy-3-oxobutyl phosphate.

Belongs to the DMRL synthase family.

It catalyses the reaction (2S)-2-hydroxy-3-oxobutyl phosphate + 5-amino-6-(D-ribitylamino)uracil = 6,7-dimethyl-8-(1-D-ribityl)lumazine + phosphate + 2 H2O + H(+). It functions in the pathway cofactor biosynthesis; riboflavin biosynthesis; riboflavin from 2-hydroxy-3-oxobutyl phosphate and 5-amino-6-(D-ribitylamino)uracil: step 1/2. Its function is as follows. Catalyzes the formation of 6,7-dimethyl-8-ribityllumazine by condensation of 5-amino-6-(D-ribitylamino)uracil with 3,4-dihydroxy-2-butanone 4-phosphate. This is the penultimate step in the biosynthesis of riboflavin. The protein is 6,7-dimethyl-8-ribityllumazine synthase of Chromobacterium violaceum (strain ATCC 12472 / DSM 30191 / JCM 1249 / CCUG 213 / NBRC 12614 / NCIMB 9131 / NCTC 9757 / MK).